Here is a 236-residue protein sequence, read N- to C-terminus: Ribonuclease 3 (236 aa).

The RNase III domain maps to 8 to 130; the sequence is FRRLSQALDY…TFAAVSFDAD (123 aa). A Mg(2+)-binding site is contributed by glutamate 43. Aspartate 47 is an active-site residue. 2 residues coordinate Mg(2+): aspartate 116 and glutamate 119. The active site involves glutamate 119. Residues 157–227 enclose the DRBM domain; that stretch reads DAKTRLQEAL…AEAALTLLEQ (71 aa).

It belongs to the ribonuclease III family. Homodimer. Mg(2+) serves as cofactor.

The protein resides in the cytoplasm. It catalyses the reaction Endonucleolytic cleavage to 5'-phosphomonoester.. Digests double-stranded RNA. Involved in the processing of primary rRNA transcript to yield the immediate precursors to the large and small rRNAs (23S and 16S). Processes some mRNAs, and tRNAs when they are encoded in the rRNA operon. Processes pre-crRNA and tracrRNA of type II CRISPR loci if present in the organism. This chain is Ribonuclease 3, found in Chromobacterium violaceum (strain ATCC 12472 / DSM 30191 / JCM 1249 / CCUG 213 / NBRC 12614 / NCIMB 9131 / NCTC 9757 / MK).